The following is a 163-amino-acid chain: Transcription antitermination protein NusB (163 aa).

Residues M1–A21 are disordered.

The protein belongs to the NusB family.

In terms of biological role, involved in transcription antitermination. Required for transcription of ribosomal RNA (rRNA) genes. Binds specifically to the boxA antiterminator sequence of the ribosomal RNA (rrn) operons. The sequence is that of Transcription antitermination protein NusB from Dechloromonas aromatica (strain RCB).